Reading from the N-terminus, the 414-residue chain is MSLKDKFFSHVSQEDWNDWKWQVRNRIETVEELKKYIPLTPEEEEGVKRCLDTLRMAITPYYLSLIDVENPNDPVRKQAVPLSLELHRAASDQEDPLHEDGDSPVPGLTHRYPDRVLLLMTDQCSMYCRHCTRRRFAGQTDSAVDTKQIDAAIEYIKNTPQVRDVLLSGGDALLISDEKLEYTIKRLREIPHVEVIRIGSRVPVVMPQRITPELVSMLKKYHPVWLNTHFNHPNEITEESKRACELLADAGIPLGNQSVLLAGVNDCMHVMKKLVNDLVKIRVRPYYIYQCDLSVGIEHFRTPVAKGIEIIEGLRGHTSGYCVPTFVVDAPGGGGKTPVMPNYVISQNHNKVILRNFEGVITTYDEPDHYTFHCDCDVCTGKTNVHKVGVAGLLNGETATLEPEGLERKQRGHH.

The segment covering 89–101 (AASDQEDPLHEDG) has biased composition (basic and acidic residues). Residues 89 to 108 (AASDQEDPLHEDGDSPVPGL) form a disordered region. The 212-residue stretch at 110–321 (HRYPDRVLLL…EGLRGHTSGY (212 aa)) folds into the Radical SAM core domain. [4Fe-4S] cluster is bound by residues C124, C128, and C131. C267 lines the Zn(2+) pocket. K336 bears the N6-(pyridoxal phosphate)lysine mark. C374, C376, and C379 together coordinate Zn(2+).

This sequence belongs to the radical SAM superfamily. KamA family. Homotetramer. The cofactor is [4Fe-4S] cluster. Pyridoxal 5'-phosphate is required as a cofactor. Requires Zn(2+) as cofactor.

It catalyses the reaction L-lysine = (3S)-3,6-diaminohexanoate. The protein operates within amino-acid degradation; L-lysine degradation via acetate pathway. Functionally, catalyzes the interconversion of L-alpha-lysine and L-beta-lysine. The sequence is that of L-lysine 2,3-aminomutase (kamA) from Acetoanaerobium sticklandii (strain ATCC 12662 / DSM 519 / JCM 1433 / CCUG 9281 / NCIMB 10654 / HF) (Clostridium sticklandii).